We begin with the raw amino-acid sequence, 360 residues long: Nucleoporin SEH1-A (360 aa).

6 WD repeats span residues 10–49 (DHKD…NWHC), 55–96 (THSG…SNDK), 111–152 (DSRT…NLSQ), 160–210 (SCKL…RKYA), 217–258 (SVSD…KELS), and 276–315 (NHNS…NWKC).

Belongs to the WD repeat SEC13 family. Component of the Nup107-160 subcomplex of the nuclear pore complex (NPC). The Nup107-160 subcomplex includes NUP160, NUP133, NUP107, NUP98, NUP85, NUP43, NUP37, SEH1 and SEC13. Component of the GATOR2 subcomplex, composed of MIOS, SEC13, SEH1L, WDR24 and WDR59. The GATOR2 complex interacts with CASTOR1 and CASTOR2; the interaction is negatively regulated by arginine. The GATOR2 complex interacts with SESN1, SESN2 and SESN3; the interaction is negatively regulated by amino acids.

Its subcellular location is the chromosome. The protein resides in the centromere. It localises to the kinetochore. The protein localises to the nucleus. It is found in the nuclear pore complex. Its subcellular location is the lysosome membrane. With respect to regulation, the GATOR2 complex is negatively regulated by the upstream amino acid sensors CASTOR1 and SESN2, which sequester the GATOR2 complex in absence of amino acids. In the presence of abundant amino acids, GATOR2 is released from CASTOR1 and SESN2 and activated. Functionally, component of the Nup107-160 subcomplex of the nuclear pore complex (NPC). The Nup107-160 subcomplex is required for the assembly of a functional NPC. The Nup107-160 subcomplex is also required for normal kinetochore microtubule attachment, mitotic progression and chromosome segregation. This subunit plays a role in recruitment of the Nup107-160 subcomplex to the kinetochore. In terms of biological role, as a component of the GATOR2 complex, functions as an activator of the amino acid-sensing branch of the mTORC1 signaling pathway. The GATOR2 complex indirectly activates mTORC1 through the inhibition of the GATOR1 subcomplex. GATOR2 probably acts as an E3 ubiquitin-protein ligase toward GATOR1. In the presence of abundant amino acids, the GATOR2 complex mediates ubiquitination of the NPRL2 core component of the GATOR1 complex, leading to GATOR1 inactivation. In the absence of amino acids, GATOR2 is inhibited, activating the GATOR1 complex. In Xenopus laevis (African clawed frog), this protein is Nucleoporin SEH1-A (seh1l-a).